The sequence spans 635 residues: Threonine--tRNA ligase (635 aa).

The TGS domain occupies 1 to 61; the sequence is MIQITLPDSS…SQDSALSIVT (61 aa). The catalytic stretch occupies residues 242–533; it reads DHRKLGKELD…LIEEHAGALP (292 aa). Residues C333, H384, and H510 each coordinate Zn(2+).

This sequence belongs to the class-II aminoacyl-tRNA synthetase family. As to quaternary structure, homodimer. Requires Zn(2+) as cofactor.

It is found in the cytoplasm. It catalyses the reaction tRNA(Thr) + L-threonine + ATP = L-threonyl-tRNA(Thr) + AMP + diphosphate + H(+). In terms of biological role, catalyzes the attachment of threonine to tRNA(Thr) in a two-step reaction: L-threonine is first activated by ATP to form Thr-AMP and then transferred to the acceptor end of tRNA(Thr). Also edits incorrectly charged L-seryl-tRNA(Thr). The sequence is that of Threonine--tRNA ligase from Polaromonas naphthalenivorans (strain CJ2).